A 154-amino-acid polypeptide reads, in one-letter code: Large ribosomal subunit protein uL13 (154 aa).

Belongs to the universal ribosomal protein uL13 family. Part of the 50S ribosomal subunit.

Its function is as follows. This protein is one of the early assembly proteins of the 50S ribosomal subunit, although it is not seen to bind rRNA by itself. It is important during the early stages of 50S assembly. In Rhizobium etli (strain ATCC 51251 / DSM 11541 / JCM 21823 / NBRC 15573 / CFN 42), this protein is Large ribosomal subunit protein uL13.